A 150-amino-acid chain; its full sequence is S-protein homolog 24 (150 aa).

N122 is a glycosylation site (N-linked (GlcNAc...) asparagine).

The protein belongs to the plant self-incompatibility (S1) protein family.

The protein localises to the secreted. The protein is S-protein homolog 24 of Arabidopsis thaliana (Mouse-ear cress).